The following is a 582-amino-acid chain: MTQQQRGVVQSIAGPAVIASGMYGAKMYDIVRVGKERLVGEIIRLEGNTAFVQVYEDTSGLTVGEPVETTGLPLSVELGPGMLNGIYDGIQRPLDKIREASGDFIARGIEVSSLDRTKKWAFTPTVQAGDTVGGSSILGTVPEFSFTHKILTPPDKGGRLTWVAPAGEYTIDDTIATLEDGTNLRLAHYWPVRAPRPVAQKLDPSQPFLTGMRILDVLFPLVMGGTAAIPGPFGSGKTVTQQSVAKYGNADIVVYVGCGERGNEMTDVLVEFPELEDPKTGGPLMHRTILIANTSNMPVAAREASVYTGITLAEYFRDQGYSVSLMADSTSRWAEALREISSRLEEMPAEEGYPPYLGAKLAAFYERAGAVKTLAGEDGAVSVIGAVSPAGGDMSEPVTQATLRITGAFWRLDAGLARRRHFPAINWNGSYSLFTPILDSWYRENVGRDFPELRQRISNLLQQEASLQEVVQLVGPDALQDQERLVIETGRMLRQDFLQQNGFDPVDASASMPKNYGLMKMMLKFYDEAEAALRNGVGIDEIIQNPVIEKLSRARYVPEADFMAYAESVMDELDTTFKGVKA.

231-238 (GPFGSGKT) lines the ATP pocket.

Belongs to the ATPase alpha/beta chains family.

It catalyses the reaction ATP + H2O + 4 H(+)(in) = ADP + phosphate + 5 H(+)(out). In terms of biological role, produces ATP from ADP in the presence of a proton gradient across the membrane. The V-type alpha chain is a catalytic subunit. This chain is V-type ATP synthase alpha chain, found in Deinococcus geothermalis (strain DSM 11300 / CIP 105573 / AG-3a).